The chain runs to 126 residues: uncharacterized protein (126 aa).

At 1-9 the chain is on the extracellular side; that stretch reads MCTYIITQS. Residues 10-30 traverse the membrane as a helical segment; that stretch reads FFFLPCLSFLFFKLVGFFDSV. Over 31–73 the chain is Cytoplasmic; that stretch reads FTAGKSLRIMFELPIFDKLTSCFAAIDCSATSLDIPFAEEELF. Residues 74-94 form a helical membrane-spanning segment; it reads LMLVSEPVLIPFLFVFEFMLI. At 95–126 the chain is on the extracellular side; the sequence is CKPCGSRSRFGFPVKNVSDFEETLEFDPTLLV.

It is found in the membrane. This is an uncharacterized protein from Saccharomyces cerevisiae (strain ATCC 204508 / S288c) (Baker's yeast).